The chain runs to 86 residues: uncharacterized protein (86 aa).

The chain crosses the membrane as a helical span at residues 12–32; it reads IIFIFAIIIIVVLCVITYLYL.

It is found in the membrane. This is an uncharacterized protein from Escherichia coli (strain K12).